We begin with the raw amino-acid sequence, 280 residues long: Energy-coupling factor transporter ATP-binding protein EcfA1 (280 aa).

Residues 6 to 241 (LRIENISFQY…SHMLQEIGLD (236 aa)) form the ABC transporter domain. 40 to 47 (GQNGSGKS) serves as a coordination point for ATP.

This sequence belongs to the ABC transporter superfamily. Energy-coupling factor EcfA family. Forms a stable energy-coupling factor (ECF) transporter complex composed of 2 membrane-embedded substrate-binding proteins (S component), 2 ATP-binding proteins (A component) and 2 transmembrane proteins (T component).

Its subcellular location is the cell membrane. Functionally, ATP-binding (A) component of a common energy-coupling factor (ECF) ABC-transporter complex. Unlike classic ABC transporters this ECF transporter provides the energy necessary to transport a number of different substrates. The protein is Energy-coupling factor transporter ATP-binding protein EcfA1 of Bacillus cereus (strain ATCC 14579 / DSM 31 / CCUG 7414 / JCM 2152 / NBRC 15305 / NCIMB 9373 / NCTC 2599 / NRRL B-3711).